The primary structure comprises 2367 residues: Probable G-protein coupled receptor 179 (2367 aa).

An N-terminal signal peptide occupies residues methionine 1–alanine 25. The Extracellular segment spans residues leucine 26 to arginine 381. A cache-like region region spans residues tyrosine 62–tryptophan 245. Asparagine 75 is a glycosylation site (N-linked (GlcNAc...) asparagine). An intrachain disulfide couples cysteine 76 to cysteine 236. Residue asparagine 298 is glycosylated (N-linked (GlcNAc...) asparagine). A helical membrane pass occupies residues alanine 382 to serine 402. Topologically, residues tyrosine 403–glycine 415 are cytoplasmic. A helical membrane pass occupies residues valine 416 to leucine 436. Residues tyrosine 437 to arginine 444 are Extracellular-facing. A helical membrane pass occupies residues cysteine 445–leucine 465. A disulfide bridge connects residues cysteine 445 and cysteine 537. At lysine 466–arginine 493 the chain is on the cytoplasmic side. The helical transmembrane segment at leucine 494–glutamate 514 threads the bilayer. Topologically, residues arginine 515–aspartate 543 are extracellular. Residues tyrosine 544 to threonine 564 form a helical membrane-spanning segment. The Cytoplasmic segment spans residues arginine 565–arginine 575. A helical transmembrane segment spans residues tyrosine 576–alanine 594. At arginine 595–threonine 607 the chain is on the extracellular side. The helical transmembrane segment at leucine 608–isoleucine 628 threads the bilayer. Topologically, residues proline 629–glutamate 2367 are cytoplasmic. Disordered stretches follow at residues alanine 731–alanine 818, arginine 869–proline 932, lysine 1039–serine 1083, arginine 1098–threonine 1198, glutamate 1247–glutamate 1431, proline 1537–alanine 1557, aspartate 1577–glutamine 1672, alanine 1723–glutamate 1757, serine 1823–leucine 1852, alanine 1886–glutamate 2108, tryptophan 2133–glycine 2212, and glycine 2308–glutamate 2367. A compositionally biased stretch (low complexity) spans serine 738 to leucine 759. The segment covering serine 773 to aspartate 782 has biased composition (basic and acidic residues). Basic and acidic residues predominate over residues lysine 1039 to lysine 1067. Residues leucine 1153–methionine 1164 show a composition bias toward polar residues. Basic and acidic residues-rich tracts occupy residues glutamate 1171–arginine 1181, arginine 1277–proline 1299, glycine 1341–glycine 1362, and glutamate 1390–glutamine 1407. Basic and acidic residues predominate over residues glutamate 1615–glutamate 1639. Basic and acidic residues-rich tracts occupy residues alanine 1840–arginine 1851, alanine 1903–proline 1920, serine 1970–glutamine 1979, valine 2023–proline 2054, lysine 2061–glutamine 2070, and threonine 2165–glutamate 2180. Low complexity predominate over residues proline 2326–leucine 2340.

This sequence belongs to the G-protein coupled receptor 3 family. As to quaternary structure, homodimer. Associates with the R7 group RGS-GNB5 complexes, composed of an R7 group RGS subunit (RGS6, RGS7, RGS9 or RGS11) and GNB5, promoting their localization to the cell membrane and regulating the GTPase activator activity of R7 RGS proteins. Interacts with TRPM1. Interacts with GRM6. Interacts with EGFLAM; transsynaptic interaction is required for synaptic organization of photoreceptor cells. In terms of tissue distribution, expressed in the retina.

It is found in the cell membrane. The protein localises to the postsynaptic cell membrane. Its subcellular location is the cell projection. It localises to the dendrite. Functionally, orphan receptor involved in vision. Required for signal transduction through retinal depolarizing bipolar cells. Acts as an atypical G-protein coupled receptor that recruits and regulates the R7 group RGS-GNB5 complexes instead of activating G proteins: promotes the GTPase activator activity of R7 RGS proteins, increasing the GTPase activity of G protein alpha subunits, thereby driving them into their inactive GDP-bound form. Associates with components of metabotropic signaling cascade in retina ON-bipolar neurons, such as TRPM1 and GRM6: may control the ability of the GRM6 cascade to gate TRPM1. The protein is Probable G-protein coupled receptor 179 of Homo sapiens (Human).